The primary structure comprises 378 residues: Transmembrane 6 superfamily member 2 (378 aa).

A run of 9 helical transmembrane segments spans residues 34 to 54 (LCVVLTSALVLGLLFMAVYSL), 63 to 83 (PLYAVFVVFSFTSVVDLVIAL), 110 to 130 (IFICYWDGTVHYLLYLTMAGA), 140 to 160 (LGLYWLGSFAMSLLVFLPGNI), 170 to 190 (PTFFLAILYMLVPCWAGMRIF), 219 to 239 (LTLIVYLILAAFFTVFRGLVV), 269 to 289 (MLMYLFYALPFYCLAAYALTF), 291 to 311 (GCSWLPDWALVFAGAIGQAQF), and 332 to 352 (TWATFLLSNLLFALGPHLLAL). EXPERA domains follow at residues 61-186 (YDPL…CWAG) and 217-351 (ADLT…HLLA).

The protein belongs to the TM6SF family.

It is found in the endoplasmic reticulum membrane. The protein resides in the endoplasmic reticulum-Golgi intermediate compartment membrane. In terms of biological role, regulator of liver fat metabolism influencing triglyceride secretion and hepatic lipid droplet content. May function as sterol isomerase. This Rattus norvegicus (Rat) protein is Transmembrane 6 superfamily member 2 (Tm6sf2).